A 320-amino-acid polypeptide reads, in one-letter code: Cytochrome f (320 aa).

The signal sequence occupies residues Met1–Ala35. Heme contacts are provided by Tyr36, Cys56, Cys59, and His60. The chain crosses the membrane as a helical span at residues Val286–Leu305.

This sequence belongs to the cytochrome f family. As to quaternary structure, the 4 large subunits of the cytochrome b6-f complex are cytochrome b6, subunit IV (17 kDa polypeptide, petD), cytochrome f and the Rieske protein, while the 4 small subunits are PetG, PetL, PetM and PetN. The complex functions as a dimer. Heme is required as a cofactor.

The protein resides in the plastid. Its subcellular location is the chloroplast thylakoid membrane. Functionally, component of the cytochrome b6-f complex, which mediates electron transfer between photosystem II (PSII) and photosystem I (PSI), cyclic electron flow around PSI, and state transitions. This is Cytochrome f (petA) from Zea mays (Maize).